Here is a 412-residue protein sequence, read N- to C-terminus: Tryptophan synthase beta chain 1 (412 aa).

An N6-(pyridoxal phosphate)lysine modification is found at K103.

Belongs to the TrpB family. In terms of assembly, tetramer of two alpha and two beta chains. Pyridoxal 5'-phosphate is required as a cofactor.

The enzyme catalyses (1S,2R)-1-C-(indol-3-yl)glycerol 3-phosphate + L-serine = D-glyceraldehyde 3-phosphate + L-tryptophan + H2O. Its pathway is amino-acid biosynthesis; L-tryptophan biosynthesis; L-tryptophan from chorismate: step 5/5. The beta subunit is responsible for the synthesis of L-tryptophan from indole and L-serine. In Chlamydia caviae (strain ATCC VR-813 / DSM 19441 / 03DC25 / GPIC) (Chlamydophila caviae), this protein is Tryptophan synthase beta chain 1 (trpB1).